The sequence spans 355 residues: 3-dehydroquinate synthase (355 aa).

Residues 71-76, 105-109, 129-130, Lys142, and Lys151 contribute to the NAD(+) site; these read EGEERK, GVVGD, and TS. Zn(2+) is bound by residues Glu184, His246, and His263.

It belongs to the sugar phosphate cyclases superfamily. Dehydroquinate synthase family. Co(2+) is required as a cofactor. Requires Zn(2+) as cofactor. The cofactor is NAD(+).

The protein localises to the cytoplasm. The enzyme catalyses 7-phospho-2-dehydro-3-deoxy-D-arabino-heptonate = 3-dehydroquinate + phosphate. The protein operates within metabolic intermediate biosynthesis; chorismate biosynthesis; chorismate from D-erythrose 4-phosphate and phosphoenolpyruvate: step 2/7. Functionally, catalyzes the conversion of 3-deoxy-D-arabino-heptulosonate 7-phosphate (DAHP) to dehydroquinate (DHQ). This is 3-dehydroquinate synthase from Streptococcus pneumoniae (strain JJA).